The chain runs to 236 residues: Orotidine 5'-phosphate decarboxylase (236 aa).

Substrate contacts are provided by residues Asp14, Lys36, 63–72 (DLKFHDIPNT), Thr123, Arg184, Gln193, Gly213, and Arg214. Lys65 (proton donor) is an active-site residue.

It belongs to the OMP decarboxylase family. Type 1 subfamily. In terms of assembly, homodimer.

The enzyme catalyses orotidine 5'-phosphate + H(+) = UMP + CO2. It functions in the pathway pyrimidine metabolism; UMP biosynthesis via de novo pathway; UMP from orotate: step 2/2. Catalyzes the decarboxylation of orotidine 5'-monophosphate (OMP) to uridine 5'-monophosphate (UMP). The chain is Orotidine 5'-phosphate decarboxylase from Marinobacter nauticus (strain ATCC 700491 / DSM 11845 / VT8) (Marinobacter aquaeolei).